The primary structure comprises 192 residues: Capsid protein (192 aa).

Residues 1–30 (MEDSQPIKVRQPSISAPGTHLSPNPGQQSP) form a disordered region. Residues 12–30 (PSISAPGTHLSPNPGQQSP) show a composition bias toward polar residues.

This sequence belongs to the tymoviruses capsid protein family.

It is found in the virion. In terms of biological role, self-assembles to form a T=3 icosahedral capsid composed of 180 copies of the capsid protein. The capsid encapsulates the single-stranded RNA genome. The chain is Capsid protein from Ononis.